Here is a 367-residue protein sequence, read N- to C-terminus: Homoserine O-acetyltransferase (367 aa).

The 307-residue stretch at 44–350 (NAIMVTHAWT…AYGHDAFLLE (307 aa)) folds into the AB hydrolase-1 domain. S150 serves as the catalytic Nucleophile. R217 lines the substrate pocket. Residues D311 and H344 contribute to the active site. Position 345 (D345) interacts with substrate.

The protein belongs to the AB hydrolase superfamily. MetX family. In terms of assembly, homodimer.

Its subcellular location is the cytoplasm. It catalyses the reaction L-homoserine + acetyl-CoA = O-acetyl-L-homoserine + CoA. It functions in the pathway amino-acid biosynthesis; L-methionine biosynthesis via de novo pathway; O-acetyl-L-homoserine from L-homoserine: step 1/1. Functionally, transfers an acetyl group from acetyl-CoA to L-homoserine, forming acetyl-L-homoserine. This chain is Homoserine O-acetyltransferase, found in Geotalea daltonii (strain DSM 22248 / JCM 15807 / FRC-32) (Geobacter daltonii).